Here is a 187-residue protein sequence, read N- to C-terminus: MSSREITILKIQEPTRSIASLTRIMEEELSQYRKTLPKGFREEVDCDEDTVLFLHVDFLPLDFQKTTELLLTGKKNLVPVVAIDLQGQILMQAFGNEESQTLSLKTGYAHYFSRSRNQLWKKGDTSGHTQKILQILSPTDRSFLVYQVEQEVAACHEGYYSCFFRERMEGVTWKLLPVPRNFLPEKS.

This sequence belongs to the PRA-CH family. In terms of assembly, homodimer.

The protein resides in the cytoplasm. The catalysed reaction is 1-(5-phospho-beta-D-ribosyl)-5'-AMP + H2O = 1-(5-phospho-beta-D-ribosyl)-5-[(5-phospho-beta-D-ribosylamino)methylideneamino]imidazole-4-carboxamide. Its pathway is amino-acid biosynthesis; L-histidine biosynthesis; L-histidine from 5-phospho-alpha-D-ribose 1-diphosphate: step 3/9. Functionally, catalyzes the hydrolysis of the adenine ring of phosphoribosyl-AMP. The sequence is that of Phosphoribosyl-AMP cyclohydrolase (hisI) from Leptospira interrogans serogroup Icterohaemorrhagiae serovar Lai (strain 56601).